The chain runs to 1387 residues: Dicer-like protein 2-1 (1387 aa).

Residues 26–205 (MFEASLKENI…LLKIESNLDA (180 aa)) form the Helicase ATP-binding domain. 39–46 (MGTGSGKT) lines the ATP pocket. A DEAH box motif is present at residues 146 to 149 (DEAH). In terms of domain architecture, Helicase C-terminal spans 370–535 (KFRSLLEFLD…AYEDDERRLR (166 aa)). In terms of domain architecture, Dicer dsRNA-binding fold spans 565–659 (AVAHLNHFCA…LPFKRNLELK (95 aa)). RNase III domains follow at residues 915–1055 (ATRL…IDGG) and 1094–1277 (DDHL…IDSH). Mg(2+)-binding residues include Glu-1133, Asp-1263, and Glu-1266.

It belongs to the helicase family. Dicer subfamily. It depends on Mg(2+) as a cofactor. Requires Mn(2+) as cofactor.

Functionally, dicer-like endonuclease involved in cleaving double-stranded RNA in the RNA interference (RNAi) pathway. Produces 21 to 25 bp dsRNAs (siRNAs) which target the selective destruction of homologous RNAs leading to sequence-specific suppression of gene expression, called post-transcriptional gene silencing (PTGS). Part of a broad host defense response against viral infection and transposons. The polypeptide is Dicer-like protein 2-1 (dcl2-1) (Aspergillus niger (strain ATCC MYA-4892 / CBS 513.88 / FGSC A1513)).